We begin with the raw amino-acid sequence, 382 residues long: Enoyl-[acyl-carrier-protein] reductase, mitochondrial (382 aa).

A mitochondrion-targeting transit peptide spans 1–17 (MSSFLSKRFLSFSQRAM). Tyr-77 functions as the Proton donor in the catalytic mechanism. NADP(+) contacts are provided by residues Asn-159, 187–190 (TSSV), 210–212 (RDR), 285–288 (YGGM), 310–312 (FWV), and Lys-375.

It belongs to the zinc-containing alcohol dehydrogenase family. Quinone oxidoreductase subfamily. Homodimer.

It localises to the mitochondrion matrix. The enzyme catalyses a 2,3-saturated acyl-[ACP] + NADP(+) = a (2E)-enoyl-[ACP] + NADPH + H(+). Catalyzes the NADPH-dependent reduction of trans-2-enoyl thioesters in mitochondrial fatty acid synthesis (fatty acid synthesis type II). Fatty acid chain elongation in mitochondria uses acyl carrier protein (ACP) as an acyl group carrier, but the enzyme accepts both ACP and CoA thioesters as substrates in vitro. Required for respiration and the maintenance of the mitochondrial compartment. The protein is Enoyl-[acyl-carrier-protein] reductase, mitochondrial (ETR1) of Kluyveromyces lactis (strain ATCC 8585 / CBS 2359 / DSM 70799 / NBRC 1267 / NRRL Y-1140 / WM37) (Yeast).